A 290-amino-acid polypeptide reads, in one-letter code: Programmed cell death 1 ligand 1 (290 aa).

The first 18 residues, 1–18 (MRIFAVFIFMTYWHLLNA), serve as a signal peptide directing secretion. The Ig-like V-type domain occupies 19–127 (FTVTVPKDLY…YGGADYKRIT (109 aa)). Residues 19 to 238 (FTVTVPKDLY…LPLAHPPNER (220 aa)) are Extracellular-facing. Residue asparagine 35 is glycosylated (N-linked (GlcNAc...) asparagine). Disulfide bonds link cysteine 40-cysteine 114 and cysteine 155-cysteine 209. The Ig-like C2-type domain occupies 133–225 (PYNKINQRIL…PEENHTAELV (93 aa)). 3 N-linked (GlcNAc...) asparagine glycosylation sites follow: asparagine 192, asparagine 200, and asparagine 219. A helical transmembrane segment spans residues 239-259 (THLVILGAILLCLGVALTFIF). Residues 260–290 (RLRKGRMMDVKKCGIQDTNSKKQSDTHLEET) are Cytoplasmic-facing.

It belongs to the immunoglobulin superfamily. BTN/MOG family. In terms of assembly, interacts with PDCD1. Interacts (via transmembrane domain) with CMTM4 and CMTM6. Interacts with (phosphorylated) STAT3; promoting nuclear translocation. Interacts with CD80. As to quaternary structure, may form homomultimers. Post-translationally, ubiquitinated; STUB1 likely mediates polyubiquitination of PD-L1/CD274 triggering its degradation. Ubiquitinated by MARCHF8; leading to degradation. Deubiquitinated by USP22; leading to stabilization. Highly expressed in the heart, skeletal muscle, placenta and lung. Weakly expressed in the thymus, spleen, kidney and liver. Expressed on activated T- and B-cells, dendritic cells, keratinocytes and monocytes. In terms of tissue distribution, widely expressed, highest in lung, liver and pituitary and in various peripheral blood cells, including neutrophils and some subtypes of lymphoid and myeloid cells.

It is found in the cell membrane. It localises to the early endosome membrane. The protein localises to the recycling endosome membrane. The protein resides in the nucleus. Its subcellular location is the endomembrane system. It is found in the secreted. In terms of biological role, plays a critical role in induction and maintenance of immune tolerance to self. As a ligand for the inhibitory receptor PDCD1/PD-1, modulates the activation threshold of T-cells and limits T-cell effector response. Through a yet unknown activating receptor, may costimulate T-cell subsets that predominantly produce interleukin-10 (IL10). Can also act as a transcription coactivator: in response to hypoxia, translocates into the nucleus via its interaction with phosphorylated STAT3 and promotes transcription of GSDMC, leading to pyroptosis. Its function is as follows. The PDCD1-mediated inhibitory pathway is exploited by tumors to attenuate anti-tumor immunity and escape destruction by the immune system, thereby facilitating tumor survival. The interaction with PDCD1/PD-1 inhibits cytotoxic T lymphocytes (CTLs) effector function. The blockage of the PDCD1-mediated pathway results in the reversal of the exhausted T-cell phenotype and the normalization of the anti-tumor response, providing a rationale for cancer immunotherapy. The protein is Programmed cell death 1 ligand 1 of Homo sapiens (Human).